We begin with the raw amino-acid sequence, 487 residues long: MVLKDLCDRIVAAKCSSKSSTEIVDNTQVPASSKAGSSDSKFPKASLWSTFFTSGFSVDETYSESSSSEKKTVHSRNSGWAAAVRKVVSGGSMRRFQERVLGSCRTDVSSSDGDIWLLGVCHKISQHESTGDVDIRNVFAAFEQDFFSRILITYRKGFDAIEDSKYTSDVNWGCMLRSSQMLVAQALLFHKLGRSWRKTVDKPVDKEYIDILQLFGDSEAAAFSIHNLLQAGKGYGLAVGSWVGPYAMCRTWEVLARNQREKNEQGEQLLPMAIYVVSGDEDGERGGAPVVCIEDACKRCLEFSRGLVPWTPLLLLVPLVLGLDKVNLRYIPLLQSTFKFPQSLGILGGKPGASTYIIGVQNDKAFYLDPHEVKPVVNITGDTQEPNTSSYHCNISRHMPLDSIDPSLAIGFYCRDKDDFDDFCSRATKLAEESNGAPLFTVAQSRSLPMQVTSNSVSGDDTRFEEDDSLSMNLVNDAGNEDDWQFL.

The Nucleophile role is filled by C174. Catalysis depends on residues D369 and H371.

The protein belongs to the peptidase C54 family. In terms of assembly, interacts with ATG8.

The protein localises to the cytoplasm. The enzyme catalyses [protein]-C-terminal L-amino acid-glycyl-phosphatidylethanolamide + H2O = [protein]-C-terminal L-amino acid-glycine + a 1,2-diacyl-sn-glycero-3-phosphoethanolamine. Its function is as follows. Cysteine protease that plays a key role in autophagy by mediating both proteolytic activation and delipidation of ATG8 family proteins. The protease activity is required for proteolytic activation of ATG8 family proteins: cleaves the C-terminal amino acid of ATG8 proteins to reveal a C-terminal glycine. Exposure of the glycine at the C-terminus is essential for ATG8 proteins conjugation to phosphatidylethanolamine (PE) and insertion to membranes, which is necessary for autophagy. In addition to the protease activity, also mediates delipidation of PE-conjugated ATG8 proteins. This Medicago truncatula (Barrel medic) protein is Cysteine protease ATG4 (ATG4).